The following is a 312-amino-acid chain: Acyl-CoA C20 Delta5-desaturase (312 aa).

2 helical membrane passes run 45 to 65 (VFHILFIGGLHVLCLFAPSTF) and 69 to 89 (SFWVCFALYAICGVFGTTLSF). 5 residues coordinate Fe cation: H90, H95, H127, H130, and H131. Residues 90-95 (HRNLTH) carry the Histidine box-1 motif. A Histidine box-2 motif is present at residues 127–131 (HRYHH). The helical transmembrane segment at 193-213 (LQAALLYLFGGFPFIVWGMAV) threads the bilayer. Positions 230, 259, 262, and 263 each coordinate Fe cation. A Histidine box-3 motif is present at residues 259-263 (HNNHH).

This sequence belongs to the fatty acid desaturase type 1 family. The cofactor is Fe(2+).

The protein localises to the membrane. The enzyme catalyses (11Z,14Z)-eicosadienoyl-CoA + AH2 + O2 = (5Z,11Z,14Z)-eicosatrienoyl-CoA + A + 2 H2O. The catalysed reaction is (11Z,14Z,17Z)-eicosatrienoyl-CoA + AH2 + O2 = (5Z,11Z,14Z,17Z)-eicosatetraenoyl-CoA + A + 2 H2O. It functions in the pathway lipid metabolism; polyunsaturated fatty acid biosynthesis. Its function is as follows. Catalyzes the desaturation of 20:2Delta(11,14) and 20:3Delta(11,14,17) to generate sciadonic acid (20:3Delta(5,11,14)) and juniperonic acid (20:4Delta(5,11,14,17)). The sequence is that of Acyl-CoA C20 Delta5-desaturase from Anemone leveillei (Windflower).